A 226-amino-acid polypeptide reads, in one-letter code: MKMETFLVCLFHNAKGLHQQIQEILYLLRMHIYETNLYLKQELSQLIYPNRQLSFVLLMPLSLLRNWDDIEYLTDIVDDKQTLHYAANLLTNYVLHLSMYQKLTKQYFLLAVKRVSEKLNKKQQHSFYEVLVTSEALNNYENLPKNILNTLMFAVRYVFNPTPNYSEILAELKKKNKIHHIIFNMVITDFQQIREQQMCKHLCETNNELRQECKEIIFDLKVVGNV.

An N-terminal signal peptide occupies residues 1–16; that stretch reads MKMETFLVCLFHNAKG. N-linked (GlcNAc...) asparagine; by host glycosylation is present at Asn-164.

Belongs to the asfivirus I226R family.

In terms of biological role, plays a role in the inhibition of host NF-kappa-B and IRF3 signaling pathways. Mechanistically, promotes the degradation of host IKBKG through enhancing its ubiquitination leading to inhibition of both pathways. This Ornithodoros (relapsing fever ticks) protein is Late protein I226R.